The chain runs to 391 residues: ATP-sensitive inward rectifier potassium channel 1 (391 aa).

At 1 to 77 (MGASERSVFR…IWTTVLDLKW (77 aa)) the chain is on the cytoplasmic side. Ser-44 is modified (phosphoserine; by SGK1). A helical transmembrane segment spans residues 78–102 (RYKMTVFITAFLGSWFLFGLLWYVV). At 103–127 (AYVHKDLPEFYPPDNRTPCVENING) the chain is on the extracellular side. Asn-117 carries an N-linked (GlcNAc...) asparagine glycan. Residues 128–139 (MTSAFLFSLETQ) constitute an intramembrane region (helical; Pore-forming). Residues 140–146 (VTIGYGF) constitute an intramembrane region (pore-forming). The short motif at 141 to 146 (TIGYGF) is the Selectivity filter element. Topologically, residues 147–155 (RFVTEQCAT) are extracellular. A helical membrane pass occupies residues 156 to 177 (AIFLLIFQSILGVIINSFMCGA). Over 178–391 (ILAKISRPKK…EVDETDDTQM (214 aa)) the chain is Cytoplasmic. The polyphosphoinositide (PIP2)-binding stretch occupies residues 180–207 (AKISRPKKRAKTITFSKNAVISKRGGKL). 223-230 (GSHIYGKL) is an ATP binding site.

Belongs to the inward rectifier-type potassium channel (TC 1.A.2.1) family. KCNJ1 subfamily. In terms of assembly, interacts with SGK1 and SLC9A3R2/NHERF2. In terms of processing, phosphorylation at Ser-44 by SGK1 is necessary for its expression at the cell membrane. Mainly in kidney (renal cortex, medulla and papilla). In terms of tissue distribution, kidney.

Its subcellular location is the cell membrane. The enzyme catalyses K(+)(in) = K(+)(out). With respect to regulation, inhibited by WNK3. Activated by phosphatidylinositol 4,5 biphosphate (PtdIns(4,5)P2). Inward rectifier potassium channels are characterized by a greater tendency to allow potassium to flow into the cell rather than out of it. Their voltage dependence is regulated by the concentration of extracellular potassium; as external potassium is raised, the voltage range of the channel opening shifts to more positive voltages. The inward rectification is mainly due to the blockage of outward current by internal magnesium. This channel is activated by internal ATP and can be blocked by external barium. In the kidney, probably plays a major role in potassium homeostasis. Functionally, inward rectifier potassium channels are characterized by a greater tendency to allow potassium to flow into the cell rather than out of it. Their voltage dependence is regulated by the concentration of extracellular potassium; as external potassium is raised, the voltage range of the channel opening shifts to more positive voltages. The sequence is that of ATP-sensitive inward rectifier potassium channel 1 (Kcnj1) from Rattus norvegicus (Rat).